The primary structure comprises 435 residues: Histidinol dehydrogenase (435 aa).

NAD(+) is bound by residues Tyr-131, Gln-189, and Asn-212. Ser-238, Gln-260, and His-263 together coordinate substrate. Residues Gln-260 and His-263 each contribute to the Zn(2+) site. Catalysis depends on proton acceptor residues Glu-327 and His-328. Residues His-328, Asp-361, Glu-415, and His-420 each coordinate substrate. Asp-361 is a Zn(2+) binding site. Position 420 (His-420) interacts with Zn(2+).

This sequence belongs to the histidinol dehydrogenase family. Homodimer. It depends on Zn(2+) as a cofactor.

The enzyme catalyses L-histidinol + 2 NAD(+) + H2O = L-histidine + 2 NADH + 3 H(+). The protein operates within amino-acid biosynthesis; L-histidine biosynthesis; L-histidine from 5-phospho-alpha-D-ribose 1-diphosphate: step 9/9. Its function is as follows. Catalyzes the sequential NAD-dependent oxidations of L-histidinol to L-histidinaldehyde and then to L-histidine. The sequence is that of Histidinol dehydrogenase from Buchnera aphidicola subsp. Baizongia pistaciae (strain Bp).